Reading from the N-terminus, the 692-residue chain is MTREFSLENTRNIGIMAHIDAGKTTATERILYYTGRIHKIGETHEGASQMDWMEQEQERGITITSAATTAQWKGHRVNIIDTPGHVDFTVEVERSLRVLDGAVAVLDAQSGVEPQTETVWRQATTYGVPRIVFVNKMDKIGADFLYSVGTIHDRLQANAHPIQLPIGAEDEFNGIIDLVEECAYMYSNDLGTDIERVEIPEEHKELAEEYRGKLIEAVAELDEEMMMKYLEGEEITVEELKAGIRKATTSVEFFPVICGSAFKNKGVQILLDAVIDYLPSPLDVPAIKGTLPDTEEAIERKSSDEEPFAALAFKIMTDPYVGKLTFFRVYSGVLNSGSYVKNSTKGKRERVGRILQMHANSREEISTVYAGDIAAAVGLKDTTTGDTLCDEKSLVILESMEFPEPVISVAIEPKSKADQDKMGTALSKLSEEDPTFRAHTDQETGQTIIAGMGELHLDIIVDRMRREFKVEANVGAPQVAYRETFRAAAKVEGKFARQSGGRGQFGHVWIEFEPNEEGKGFEFQNKVVGGVVPREYIPAVGAGLEDALKNGVLAGYPLVDIKAALVDGSYHDVDSSEMAFKIAASMALKAAVSKCSPVILEPMMKVEVVIPEEYMGDIMGDVTSRRGRVEGMEARGNAQVVRAMVPLSEMFGYATALRSNTQGRGTFSMTFDHYEEVPKSVSEEIIKKNKGE.

A tr-type G domain is found at Glu-8–Leu-282. Residues Ala-17–Thr-24, Asp-81–His-85, and Asn-135–Asp-138 each bind GTP.

It belongs to the TRAFAC class translation factor GTPase superfamily. Classic translation factor GTPase family. EF-G/EF-2 subfamily.

The protein resides in the cytoplasm. Its function is as follows. Catalyzes the GTP-dependent ribosomal translocation step during translation elongation. During this step, the ribosome changes from the pre-translocational (PRE) to the post-translocational (POST) state as the newly formed A-site-bound peptidyl-tRNA and P-site-bound deacylated tRNA move to the P and E sites, respectively. Catalyzes the coordinated movement of the two tRNA molecules, the mRNA and conformational changes in the ribosome. This Bacillus mycoides (strain KBAB4) (Bacillus weihenstephanensis) protein is Elongation factor G.